The primary structure comprises 173 residues: MVDSYDDSLDGEKSKTQVKRELHALVDLGERLTTLKADVLAKLPLTDALRKALAEAPKHTANIARKRHILFIGKLMRDQDQEAILVLLDQLDASTRQYNERFHNLERWRDRLIAGDDADLEKFVIEYPDADRQQLRSLIRQAQHEVARNKPPATSRKIFKYIRELDELQRGLR.

It belongs to the DarP family.

Its subcellular location is the cytoplasm. Functionally, member of a network of 50S ribosomal subunit biogenesis factors which assembles along the 30S-50S interface, preventing incorrect 23S rRNA structures from forming. Promotes peptidyl transferase center (PTC) maturation. The sequence is that of Dual-action ribosomal maturation protein DarP from Pseudomonas syringae pv. tomato (strain ATCC BAA-871 / DC3000).